Reading from the N-terminus, the 485-residue chain is Probable phosphomannomutase (485 aa).

The active-site Phosphoserine intermediate is serine 86. Mg(2+)-binding residues include serine 86, aspartate 236, aspartate 238, and aspartate 240.

It belongs to the phosphohexose mutase family. It depends on Mg(2+) as a cofactor.

The enzyme catalyses alpha-D-mannose 1-phosphate = D-mannose 6-phosphate. The polypeptide is Probable phosphomannomutase (Haemophilus influenzae (strain ATCC 51907 / DSM 11121 / KW20 / Rd)).